Here is a 254-residue protein sequence, read N- to C-terminus: U3 small nucleolar RNA-associated protein NOL7 (254 aa).

The segment at 1–90 (MVQLRPRLSR…ASARRDKTLL (90 aa)) is disordered. 2 stretches are compositionally biased toward acidic residues: residues 18–31 (MVDEDQAASEEEEA) and 48–61 (PLDEEEDADDEAPE). Residues 71 to 90 (EAREEELRVRASARRDKTLL) are compositionally biased toward basic and acidic residues. Lysine 127 is covalently cross-linked (Glycyl lysine isopeptide (Lys-Gly) (interchain with G-Cter in SUMO2)). Serine 129 carries the phosphoserine modification. Residue lysine 157 forms a Glycyl lysine isopeptide (Lys-Gly) (interchain with G-Cter in SUMO2) linkage. Residues 235–254 (NAKRFKKRWMAKKMKKKTYK) form a disordered region.

Belongs to the UTP16 family. As to quaternary structure, part of the small subunit (SSU) processome, composed of more than 70 proteins and the RNA chaperone small nucleolar RNA (snoRNA) U3.

The protein localises to the nucleus. It is found in the nucleolus. In terms of biological role, functions as part of the small subunit (SSU) processome, first precursor of the small eukaryotic ribosomal subunit that coordinates the first two steps of ribosome biogenesis in transcription of the primary transcript pre-RNA and pre-18S processing. During the assembly of the SSU processome in the nucleolus, many ribosome biogenesis factors, an RNA chaperone and ribosomal proteins associate with the nascent pre-rRNA and work in concert to generate RNA folding, modifications, rearrangements and cleavage as well as targeted degradation of pre-ribosomal RNA by the RNA exosome. This subunit is required for processing of the 5'-external transcribed spacer sequence (5'ETS) of the primary transcript pre-rRNA to yield the 18S rRNA. Also plays a role in maintaining early pre-rRNA levels, either by assisting in its transcription or stability. In Mus musculus (Mouse), this protein is U3 small nucleolar RNA-associated protein NOL7 (Nol7).